The sequence spans 613 residues: Apoptosis-inducing factor 1, mitochondrial (613 aa).

2 consecutive short sequence motifs (mitochondrial localization signal) follow at residues 1–31 (MFRC…PRQR) and 63–89 (KIDN…KTMK). The transit peptide at 1–54 (MFRCGGLAAGALKQKLVPLVRTVCVRSPRQRNRLPGNLFQRWHVPLELQMTRQM) directs the protein to the mitochondrion. A propeptide spans 55–101 (ASSGASGGKIDNSVLVLIVGLSTVGAGAYAYKTMKEDEKRYNERISG) (removed in mature form). Positions 100-127 (SGLGLTPEQKQKKAALSASEGEEVPQDK) are disordered. The residue at position 105 (T105) is a Phosphothreonine. An N6-succinyllysine modification is found at K109. Phosphoserine occurs at positions 116 and 118. Residues 134-483 (FLLIGGGTAA…KPYWHQSMFW (350 aa)) are FAD-dependent oxidoreductase. FAD-binding positions include 138–142 (GGGTA), 164–165 (ED), R172, and K177. W196 is a binding site for NAD(+). Residue V233 coordinates FAD. K255 is covalently cross-linked (Glycyl lysine isopeptide (Lys-Gly) (interchain with G-Cter in ubiquitin)). Position 268 is a phosphoserine (S268). FAD is bound at residue R285. S292 carries the phosphoserine modification. NAD(+) is bound by residues 308–311 (GGFL), E336, and K342. Residue S371 is modified to Phosphoserine. N6-acetyllysine is present on K388. Position 399 (G399) interacts with NAD(+). Residue D438 participates in FAD binding. A Nuclear localization signal motif is present at residues 446 to 451 (KLGRRR). Residues 453 to 454 (EH), W483, and E493 contribute to the NAD(+) site. Residues 454 to 455 (HH) and W483 contribute to the FAD site. Over residues 513-529 (AQDNPKSATEQSGTGIR) the composition is skewed to polar residues. Residues 513 to 554 (AQDNPKSATEQSGTGIRSESETESEASEITIPPSTPAVPQAP) form a disordered region. T521 bears the Phosphothreonine mark. 2 positions are modified to phosphoserine: S524 and S530. N583 is an NAD(+) binding site. An N6-acetyllysine modification is found at K593.

This sequence belongs to the FAD-dependent oxidoreductase family. As to quaternary structure, monomer (oxidized form). Homodimer (reduced form). Upon reduction with NADH, undergoes dimerization and forms tight, long-lived FADH2-NAD charge transfer complexes (CTC) resistant to oxidation. Also dimerizes with isoform 3 preventing its release from mitochondria. Interacts with XIAP/BIRC4. Interacts (via N-terminus) with EIF3G (via C-terminus). Interacts with PRELID1. Interacts with CHCHD4; the interaction increases in presence of NADH. Interacts with processed form of PARP1 (Poly [ADP-ribose] polymerase 1, processed C-terminus); interaction is mediated with poly-ADP-ribose chains attached to PARP1, promoting translocation into the nucleus. Requires FAD as cofactor. Post-translationally, under normal conditions, a 54-residue N-terminal segment is first proteolytically removed during or just after translocation into the mitochondrial intermembrane space (IMS) by the mitochondrial processing peptidase (MPP) to form the inner-membrane-anchored mature form (AIFmit). During apoptosis, it is further proteolytically processed at amino-acid position 101 leading to the generation of the mature form, which is confined to the mitochondrial IMS in a soluble form (AIFsol). AIFsol is released to the cytoplasm in response to specific death signals, and translocated to the nucleus, where it induces nuclear apoptosis in a caspase-independent manner. Ubiquitination by XIAP/BIRC4 does not lead to proteasomal degradation. Ubiquitination at Lys-255 by XIAP/BIRC4 blocks its ability to bind DNA and induce chromatin degradation, thereby inhibiting its ability to induce cell death. As to expression, expressed in all tested tissues. Detected in muscle and skin fibroblasts (at protein level). Expressed in osteoblasts (at protein level). In terms of tissue distribution, brain specific. Expressed in all tested tissues except brain. As to expression, isoform 5 is frequently down-regulated in human cancers.

The protein localises to the mitochondrion intermembrane space. The protein resides in the mitochondrion inner membrane. Its subcellular location is the cytoplasm. It is found in the nucleus. It localises to the perinuclear region. The protein localises to the mitochondrion. The protein resides in the cytosol. It carries out the reaction A + NADH + H(+) = AH2 + NAD(+). Functionally, functions both as NADH oxidoreductase and as regulator of apoptosis. In response to apoptotic stimuli, it is released from the mitochondrion intermembrane space into the cytosol and to the nucleus, where it functions as a proapoptotic factor in a caspase-independent pathway. Release into the cytoplasm is mediated upon binding to poly-ADP-ribose chains. The soluble form (AIFsol) found in the nucleus induces 'parthanatos' i.e. caspase-independent fragmentation of chromosomal DNA. Binds to DNA in a sequence-independent manner. Interacts with EIF3G, and thereby inhibits the EIF3 machinery and protein synthesis, and activates caspase-7 to amplify apoptosis. Plays a critical role in caspase-independent, pyknotic cell death in hydrogen peroxide-exposed cells. In contrast, participates in normal mitochondrial metabolism. Plays an important role in the regulation of respiratory chain biogenesis by interacting with CHCHD4 and controlling CHCHD4 mitochondrial import. Its function is as follows. Has NADH oxidoreductase activity. Does not induce nuclear apoptosis. Pro-apoptotic isoform. This Homo sapiens (Human) protein is Apoptosis-inducing factor 1, mitochondrial.